The following is a 158-amino-acid chain: Lipoprotein signal peptidase (158 aa).

A run of 3 helical transmembrane segments spans residues 4 to 24, 63 to 83, and 88 to 108; these read KYYITISLIVAIAILIIDQVT, KMGFFYIITIVILIVLVLFYI, and YNLFMQVAISLLFAGALGNFI. Catalysis depends on residues Asp118 and Asp136. Residues 131–151 form a helical membrane-spanning segment; sequence IFNVADSSLTIGVLFIIIALL.

It belongs to the peptidase A8 family.

It localises to the cell membrane. It catalyses the reaction Release of signal peptides from bacterial membrane prolipoproteins. Hydrolyzes -Xaa-Yaa-Zaa-|-(S,diacylglyceryl)Cys-, in which Xaa is hydrophobic (preferably Leu), and Yaa (Ala or Ser) and Zaa (Gly or Ala) have small, neutral side chains.. Its pathway is protein modification; lipoprotein biosynthesis (signal peptide cleavage). In terms of biological role, this protein specifically catalyzes the removal of signal peptides from prolipoproteins. This Staphylococcus haemolyticus (strain JCSC1435) protein is Lipoprotein signal peptidase.